A 156-amino-acid chain; its full sequence is V-type proton ATPase 16 kDa proteolipid subunit c (156 aa).

Residues 1-7 are Lumenal-facing; the sequence is MAENPIY. The helical transmembrane segment at 8 to 30 threads the bilayer; that stretch reads GPFFGVMGAASAIIFSALGAAYG. Residues 31–52 lie on the Cytoplasmic side of the membrane; sequence TAKSGTGIAAMSVMRPELIMKS. Residues 53–73 traverse the membrane as a helical segment; it reads IIPVVMAGIIAIYGLVVAVLI. Over 74–92 the chain is Lumenal; it reads AGSLDSPSNNYTLYRGFIH. The helical transmembrane segment at 93–114 threads the bilayer; the sequence is LGAGLAVGFSGLAAGFAIGIVG. At 115 to 126 the chain is on the cytoplasmic side; sequence DAGVRGTAQQPR. A helical transmembrane segment spans residues 127–152; sequence LFVGMILILIFAEVLGLYGLIVAIYL. Residues 153-156 lie on the Lumenal side of the membrane; the sequence is YTKQ.

The protein belongs to the V-ATPase proteolipid subunit family. As to quaternary structure, V-ATPase is a heteromultimeric enzyme made up of two complexes: the ATP-hydrolytic V1 complex and the proton translocation V0 complex. The V1 complex consists of three catalytic AB heterodimers that form a heterohexamer, three peripheral stalks each consisting of EG heterodimers, one central rotor including subunits D and F, and the regulatory subunits C and H. The proton translocation complex V0 consists of the proton transport subunit a, a ring of proteolipid subunits c9c'', rotary subunit d, subunits e and f, and the accessory subunits VhaAC45 and ATP6AP2.

It is found in the membrane. Functionally, proton-conducting pore forming subunit of the V0 complex of vacuolar(H+)-ATPase (V-ATPase), a multisubunit enzyme composed of a peripheral complex (V1) that hydrolyzes ATP and a membrane integral complex (V0) that translocates protons. V-ATPase is responsible for acidifying and maintaining the pH of intracellular compartments and in some cell types, is targeted to the plasma membrane, where it is responsible for acidifying the extracellular environment. The protein is V-type proton ATPase 16 kDa proteolipid subunit c (VHA16) of Manduca sexta (Tobacco hawkmoth).